The primary structure comprises 291 residues: ATP synthase gamma chain (291 aa).

It belongs to the ATPase gamma chain family. As to quaternary structure, F-type ATPases have 2 components, CF(1) - the catalytic core - and CF(0) - the membrane proton channel. CF(1) has five subunits: alpha(3), beta(3), gamma(1), delta(1), epsilon(1). CF(0) has three main subunits: a, b and c.

It localises to the cell membrane. Functionally, produces ATP from ADP in the presence of a proton gradient across the membrane. The gamma chain is believed to be important in regulating ATPase activity and the flow of protons through the CF(0) complex. This chain is ATP synthase gamma chain, found in Buchnera aphidicola subsp. Baizongia pistaciae (strain Bp).